The chain runs to 465 residues: Cysteine--tRNA ligase (465 aa).

C30 provides a ligand contact to Zn(2+). A 'HIGH' region motif is present at residues 32–42 (PTVYDRAHLGN). Zn(2+)-binding residues include C213, H238, and E242. The short motif at 271–275 (KMSKS) is the 'KMSKS' region element. ATP is bound at residue K274.

Belongs to the class-I aminoacyl-tRNA synthetase family. In terms of assembly, monomer. The cofactor is Zn(2+).

Its subcellular location is the cytoplasm. It carries out the reaction tRNA(Cys) + L-cysteine + ATP = L-cysteinyl-tRNA(Cys) + AMP + diphosphate. The sequence is that of Cysteine--tRNA ligase from Ruegeria pomeroyi (strain ATCC 700808 / DSM 15171 / DSS-3) (Silicibacter pomeroyi).